The primary structure comprises 361 residues: Sensor protein VanSC (361 aa).

2 helical membrane passes run 16 to 36 (FVTT…IRFI) and 59 to 79 (WLFC…IYYM). The Histidine kinase domain maps to 144-359 (YLAHDLRTPL…IFNVRLPKPA (216 aa)). At His147 the chain carries Phosphohistidine; by autocatalysis. Glu252 is a binding site for Mg(2+).

Post-translationally, autophosphorylated.

The protein localises to the membrane. It carries out the reaction ATP + protein L-histidine = ADP + protein N-phospho-L-histidine.. The polypeptide is Sensor protein VanSC (Enterococcus gallinarum).